The chain runs to 439 residues: 23S rRNA (uracil(1939)-C(5))-methyltransferase RlmD (439 aa).

Residues 10–69 (KTQLNTRHQAVQVERLDHHGAGIAYLKKKPLFIDGALPGEEVVTQLVEEKSKFARGKLIK) form the TRAM domain. [4Fe-4S] cluster-binding residues include C82, C88, C91, and C169. Residues Q272, F301, N306, E322, N349, and D370 each coordinate S-adenosyl-L-methionine. The Nucleophile role is filled by C396.

It belongs to the class I-like SAM-binding methyltransferase superfamily. RNA M5U methyltransferase family. RlmD subfamily.

The catalysed reaction is uridine(1939) in 23S rRNA + S-adenosyl-L-methionine = 5-methyluridine(1939) in 23S rRNA + S-adenosyl-L-homocysteine + H(+). Its function is as follows. Catalyzes the formation of 5-methyl-uridine at position 1939 (m5U1939) in 23S rRNA. The polypeptide is 23S rRNA (uracil(1939)-C(5))-methyltransferase RlmD (Vibrio campbellii (strain ATCC BAA-1116)).